Here is a 422-residue protein sequence, read N- to C-terminus: G-protein coupled receptor 83 (422 aa).

The first 16 residues, 1 to 16, serve as a signal peptide directing secretion; sequence MGRRGALLCLLPLLRA. At 17–70 the chain is on the extracellular side; it reads AERPEGRADEPGLEAALAGPNASHFFWSNYSFSDWQNFVGRRRYGAESQNPTVK. Asparagine 37 and asparagine 45 each carry an N-linked (GlcNAc...) asparagine glycan. A helical membrane pass occupies residues 71–91; the sequence is ALLVVAYSFIIVFSLFGNVLV. At 92-106 the chain is on the cytoplasmic side; sequence CHVIFKNQRMRSATS. Residues 107–128 traverse the membrane as a helical segment; sequence LFIVNLAVADILITLLNTPFTL. The Extracellular portion of the chain corresponds to 129–144; it reads VRFVNSTWVFGKGMCH. An N-linked (GlcNAc...) asparagine glycan is attached at asparagine 133. A helical transmembrane segment spans residues 145–166; it reads VSRFAQYCSLHVSALTLTAIAV. The Cytoplasmic segment spans residues 167-185; the sequence is DRHQVIMHPLKPRISITKG. Residues 186–207 traverse the membrane as a helical segment; it reads VIYITVIWTMATFFSLPHAICQ. Over 208–237 the chain is Extracellular; it reads KLFTFKYSEDIVRSLCLPDFPEPADLFWKY. Residues 238–259 form a helical membrane-spanning segment; that stretch reads LDLATFILLYILPLLIISVAYA. Residues 260 to 292 are Cytoplasmic-facing; that stretch reads RVAKKLWLCNTIGDVTTEQYLALRRKKKKTIKM. Residues 293–314 traverse the membrane as a helical segment; the sequence is LMLVVVLFALCWFPLNCYVLLL. Over 315-326 the chain is Extracellular; the sequence is SSKVIHTNNALY. The chain crosses the membrane as a helical span at residues 327 to 347; the sequence is FAFHWFAMSSTCYNPFIYCWL. The Cytoplasmic portion of the chain corresponds to 348-422; sequence NENFRIELKA…SSVEPIVAMS (75 aa).

The protein belongs to the G-protein coupled receptor 1 family.

The protein localises to the cell membrane. In terms of biological role, G-protein coupled receptor for PEN, a neuropeptide produced from the precursor protein, proSAAS (encoded by PCSK1N). Acts through a G(i)- and G(q)-alpha-alpha-mediated pathway in response to PEN. Plays a role in food intake and body weight regulation. May contribute to the regulation of anxiety-related behaviors. In Canis lupus familiaris (Dog), this protein is G-protein coupled receptor 83 (GPR83).